The following is a 33-amino-acid chain: NAD-reducing hydrogenase HoxS subunit gamma (33 aa).

Residues 1 to 33 (SIEIEIDGVTVTTEESRTLVDVAAEAGVYIPTL) form the 2Fe-2S ferredoxin-type domain.

Belongs to the complex I 75 kDa subunit family. As to quaternary structure, tetramer of an alpha and a gamma subunits (flavin-containing dimer), and a delta and a nickel-containing beta subunits (hydrogenase dimer). [4Fe-4S] cluster serves as cofactor.

The protein resides in the cytoplasm. It catalyses the reaction H2 + NAD(+) = NADH + H(+). Subunits alpha and gamma of HoxS constitute an NADH--oxidoreductase. In Rhodococcus opacus (Nocardia opaca), this protein is NAD-reducing hydrogenase HoxS subunit gamma (hoxU).